The primary structure comprises 485 residues: Ulvan lyase (485 aa).

The first 33 residues, 1 to 33, serve as a signal peptide directing secretion; sequence MIRNDTMLKGQFVLKKTQIALSAALMGSVLLTG. Cysteine 34 carries the N-palmitoyl cysteine lipid modification. A lipid anchor (S-diacylglycerol cysteine) is attached at cysteine 34. 2 residues coordinate substrate: asparagine 64 and asparagine 126. Residues 108–128 are disordered; sequence FKAGTSELGRRDGGKKFDNHG. The segment covering 115–128 has biased composition (basic and acidic residues); sequence LGRRDGGKKFDNHG. Histidine 127 functions as the Proton donor in the catalytic mechanism. 2 residues coordinate substrate: lysine 129 and histidine 147. Tyrosine 192 (proton acceptor) is an active-site residue. The substrate site is built by arginine 208, histidine 212, and tyrosine 250. Histidine 212 serves as a coordination point for Zn(2+). 3 residues coordinate Zn(2+): histidine 268, cysteine 270, and histidine 282. Histidine 282 lines the substrate pocket.

It belongs to the polysaccharide lyase 25 family.

The protein localises to the cell membrane. In terms of biological role, ulvan lyase involved in ulvan degradation. Ulvan is the main polysaccharide component of the Ulvales (green seaweed) cell wall. It is composed of disaccharide building blocks comprising 3-sulfated rhamnose (Rha3S) linked to D-glucuronic acid (GlcA), L-iduronic acid (IduA), or D-xylose (Xyl). Ulvan lyase catalyzes the endolytic cleavage of the glycosidic bond between Rha3S and the uronic acids GlcA or IduA, producing oligosaccharides that have unsaturated 4-deoxy-L-threo-hex-4-enopyranosiduronic acid (deltaUA) at the non-reducing end. This results eventually in the degradation of the ulvan polysaccharide into deltaUA-Rha3S disaccharides and deltaUA-Rha3S-Xyl-Rha3S tetrasaccharides. The protein is Ulvan lyase of Alteromonas sp. (strain LOR).